The sequence spans 177 residues: Adenine phosphoribosyltransferase (177 aa).

This sequence belongs to the purine/pyrimidine phosphoribosyltransferase family. As to quaternary structure, homodimer.

The protein localises to the cytoplasm. It catalyses the reaction AMP + diphosphate = 5-phospho-alpha-D-ribose 1-diphosphate + adenine. Its pathway is purine metabolism; AMP biosynthesis via salvage pathway; AMP from adenine: step 1/1. Catalyzes a salvage reaction resulting in the formation of AMP, that is energically less costly than de novo synthesis. The sequence is that of Adenine phosphoribosyltransferase from Leptospira interrogans serogroup Icterohaemorrhagiae serovar copenhageni (strain Fiocruz L1-130).